Reading from the N-terminus, the 423-residue chain is Lysosomal acid phosphatase (423 aa).

The N-terminal stretch at 1–30 (MAGRRFGWSRAALLQLILGVNLMVMPRTQA) is a signal peptide. Over 31 to 380 (RTLRFVTLLY…QLAGGPADTE (350 aa)) the chain is Lumenal. Catalysis depends on His-42, which acts as the Nucleophile. Asn-92, Asn-133, Asn-167, Asn-177, Asn-191, and Asn-267 each carry an N-linked (GlcNAc...) asparagine glycan. Cystine bridges form between Cys-159/Cys-370, Cys-212/Cys-310, and Cys-345/Cys-349. Asp-287 functions as the Proton donor in the catalytic mechanism. Asn-322 and Asn-331 each carry an N-linked (GlcNAc...) asparagine glycan. Residues 381–401 (VIVALAVCGSILFLLIVLLLT) traverse the membrane as a helical segment. At 402 to 423 (VLFRVQAQPPGYRHVPDGEDHA) the chain is on the cytoplasmic side.

This sequence belongs to the histidine acid phosphatase family. Post-translationally, the membrane-bound form is converted to the soluble form by sequential proteolytic processing. First, the C-terminal cytoplasmic tail is removed. Cleavage by a lysosomal protease releases the soluble form in the lysosome lumen.

It is found in the lysosome membrane. The protein resides in the lysosome lumen. It carries out the reaction a phosphate monoester + H2O = an alcohol + phosphate. This chain is Lysosomal acid phosphatase (ACP2), found in Bos taurus (Bovine).